We begin with the raw amino-acid sequence, 508 residues long: Metalloprotease TIKI1 (508 aa).

A signal peptide spans 1 to 23 (MVIIWNIFLPAFLLVLAKASLRS). Over 24–485 (SRDSANCKLN…KYIKAAQSVS (462 aa)) the chain is Extracellular. Residues Asn-219, Asn-228, Asn-277, and Asn-335 are each glycosylated (N-linked (GlcNAc...) asparagine). Residues 486–506 (FSLSIPSAFLLLAWCFQQVAV) traverse the membrane as a helical segment. Topologically, residues 507–508 (LQ) are cytoplasmic.

It belongs to the TIKI family. Requires Mn(2+) as cofactor. Co(2+) serves as cofactor. In terms of tissue distribution, zygotically expressed in the Spemann-Mangold organizer, in particular in the head Spemann-Mangold organizer region responsible for anterior patterning.

Its subcellular location is the cell membrane. Its function is as follows. Metalloprotease that acts as a negative regulator of the Wnt signaling pathway: expressed in the Spemann-Mangold organizer and is required for anterior-neural patterning in head formation in embryos. Acts by mediating the cleavage of the N-terminal residues of a subset of Wnt proteins. Following cleavage, Wnt proteins become oxidized and form large disulfide-bond oligomers, leading to their inactivation. Able to cleave wnt8. This chain is Metalloprotease TIKI1 (trabd2a), found in Xenopus tropicalis (Western clawed frog).